The following is an 86-amino-acid chain: Sec-independent protein translocase protein TatA (86 aa).

Residues Met-1–Gly-21 traverse the membrane as a helical segment. The segment at Ala-42–Val-86 is disordered. 2 stretches are compositionally biased toward polar residues: residues Asn-47–Asp-58 and Glu-68–Thr-77.

This sequence belongs to the TatA/E family. As to quaternary structure, the Tat system comprises two distinct complexes: a TatABC complex, containing multiple copies of TatA, TatB and TatC subunits, and a separate TatA complex, containing only TatA subunits. Substrates initially bind to the TatABC complex, which probably triggers association of the separate TatA complex to form the active translocon.

The protein resides in the cell inner membrane. Its function is as follows. Part of the twin-arginine translocation (Tat) system that transports large folded proteins containing a characteristic twin-arginine motif in their signal peptide across membranes. TatA could form the protein-conducting channel of the Tat system. This is Sec-independent protein translocase protein TatA from Photorhabdus laumondii subsp. laumondii (strain DSM 15139 / CIP 105565 / TT01) (Photorhabdus luminescens subsp. laumondii).